The sequence spans 544 residues: Sialidase (544 aa).

The signal sequence occupies residues 1–22; sequence MKKAVILFSLFCFLCAIPVVQA. 3 BNR repeats span residues 239 to 250, 318 to 329, and 378 to 389; these read SRSTDGGKTWEK, AKSTDDGKTWSA, and MYSKDGGKNWKM. E399 is an active-site residue. R415 provides a ligand contact to substrate. One copy of the BNR 4 repeat lies at 425 to 436; it reads AITKDLGKTWTE. R479 serves as a coordination point for substrate. Residues 485–496 form a BNR 5 repeat; that stretch reads KISLDGGVTWSP.

This sequence belongs to the glycosyl hydrolase 33 family.

Its subcellular location is the periplasm. The enzyme catalyses Hydrolysis of alpha-(2-&gt;3)-, alpha-(2-&gt;6)-, alpha-(2-&gt;8)- glycosidic linkages of terminal sialic acid residues in oligosaccharides, glycoproteins, glycolipids, colominic acid and synthetic substrates.. Sialidases have been suggested to be pathogenic factors in microbial infections. The sequence is that of Sialidase (nanH) from Bacteroides fragilis (strain YCH46).